The primary structure comprises 273 residues: uncharacterized protein (273 aa).

This is an uncharacterized protein from Mycobacterium bovis (strain ATCC BAA-935 / AF2122/97).